Reading from the N-terminus, the 263-residue chain is MGKLTGKTALITGALQGIGEGIARTFARHGANLILLDISPEIEKLADELCGRGHRCTAVVADVRDPASVAAAIKRAKEKEGRIDILVNNAGVCRLGSFLDMSDDDRDFHIDINIKGVWNVTKAVLPEMIARKDGRIVMMSSVTGDMVADPGETAYALTKAAIVGLTKSLAVEYAQSGIRVNAICPGYVRTPMAESIARQSNPEDPESVLTEMAKAIPMRRLADPLEVGELAAFLASDESSYLTGTQNVIDGGSTLPETVSVGI.

Residue 10–32 (LITGALQGIGEGIARTFARHGAN) coordinates NAD(+). S141 is a substrate binding site. The active-site Proton acceptor is Y155.

Belongs to the short-chain dehydrogenases/reductases (SDR) family.

This chain is Oxidoreductase UcpA (ucpA), found in Escherichia coli (strain K12).